Reading from the N-terminus, the 574-residue chain is Hyaluronan synthase 3 (574 aa).

Residues 1-15 (MPVSLSTALRVVGTS) are Cytoplasmic-facing. Residues 16 to 36 (LFALAVLGGILAAYVTGYQFI) form a helical membrane-spanning segment. At 37–44 (HTEKHYLS) the chain is on the extracellular side. A helical transmembrane segment spans residues 45–65 (FGLYGAILGLHLFIQSLFAFL). At 66–398 (EHRRMRAERQ…NALWFHKHHL (333 aa)) the chain is on the cytoplasmic side. Residues 399 to 419 (WMTYESVVTGFFPFFLIATVI) traverse the membrane as a helical segment. The Extracellular portion of the chain corresponds to 420–429 (QLFYRGRIWN). Residues 430–450 (ILLFLLTVQLVGIIKATYACF) traverse the membrane as a helical segment. The Cytoplasmic segment spans residues 451-456 (LRGSAE). The helical transmembrane segment at 457 to 477 (MIFVSLYALLYMSSLLPAKMF) threads the bilayer. Topologically, residues 478–494 (AIATINKSGWGTSGRRT) are extracellular. The helical transmembrane segment at 495–515 (IVVNFVGLLPVSVWAAVLLGG) threads the bilayer. Topologically, residues 516–530 (LAYTAYSQDLLSDTE) are cytoplasmic. A helical membrane pass occupies residues 531-551 (VAFLISGAVLYACYWVALLTL). Over 552-574 (YLAMVARRCGKRKEQCGLVFAEV) the chain is Extracellular.

This sequence belongs to the NodC/HAS family. Mg(2+) serves as cofactor. In terms of processing, O-GlcNAcylation increases the hyaluronan synthase activity, HAS3 stability and its plasma membrane residence. The concentration of UDP-GlcNAc controls the level of O-GlcNAc modification.

The protein localises to the cell membrane. The protein resides in the golgi apparatus membrane. It localises to the golgi apparatus. Its subcellular location is the trans-Golgi network membrane. It is found in the cytoplasmic vesicle. The enzyme catalyses [hyaluronan](n) + UDP-N-acetyl-alpha-D-glucosamine = N-acetyl-beta-D-glucosaminyl-(1-&gt;4)-[hyaluronan](n) + UDP + H(+). It catalyses the reaction N-acetyl-beta-D-glucosaminyl-(1-&gt;4)-[hyaluronan](n) + UDP-alpha-D-glucuronate = [hyaluronan](n+1) + UDP + H(+). The protein operates within glycan biosynthesis; hyaluronan biosynthesis. Its function is as follows. Catalyzes the addition of GlcNAc or GlcUA monosaccharides to the nascent hyaluronan polymer. Therefore, it is essential to hyaluronan synthesis a major component of most extracellular matrices that has a structural role in tissues architectures and regulates cell adhesion, migration and differentiation. This is one of three isoenzymes responsible for cellular hyaluronan synthesis. This chain is Hyaluronan synthase 3 (HAS3), found in Gallus gallus (Chicken).